Reading from the N-terminus, the 81-residue chain is Protein Vpu (81 aa).

Residues 1-7 (MQSLQVL) are Extracellular-facing. Residues 8–28 (AIVALVVATIIAIVVWTIVFI) traverse the membrane as a helical segment. Residues 29–81 (EYRKILRQRKIDRLINRITERAEDSGNESDGDQEELSALVERGHLAPWDVDDL) are Cytoplasmic-facing. The disordered stretch occupies residues 50–81 (AEDSGNESDGDQEELSALVERGHLAPWDVDDL). 2 positions are modified to phosphoserine; by host CK2: Ser-53 and Ser-57. Residues 53–63 (SGNESDGDQEE) show a composition bias toward acidic residues.

The protein belongs to the HIV-1 VPU protein family. Homopentamer. Interacts with host CD4 and BRTC; these interactions induce proteasomal degradation of CD4. Interacts with host BST2; this interaction leads to the degradation of host BST2. Interacts with host FBXW11. Interacts with host AP1M1; this interaction plays a role in the mistrafficking and subsequent degradation of host BST2. Interacts with host RANBP2; this interaction allows Vpu to down-regulate host BLM sumoylation. Post-translationally, phosphorylated by host CK2. This phosphorylation is necessary for interaction with human BTRC and degradation of CD4.

It localises to the host membrane. With respect to regulation, ion channel activity is inhibited by hexamethylene amiloride in vitro. In terms of biological role, enhances virion budding by targeting host CD4 and Tetherin/BST2 to proteasome degradation. Degradation of CD4 prevents any unwanted premature interactions between viral Env and its host receptor CD4 in the endoplasmic reticulum. Degradation of antiretroviral protein Tetherin/BST2 is important for virion budding, as BST2 tethers new viral particles to the host cell membrane. Mechanistically, Vpu bridges either CD4 or BST2 to BTRC, a substrate recognition subunit of the Skp1/Cullin/F-box protein E3 ubiquitin ligase, induces their ubiquitination and subsequent proteasomal degradation. The alteration of the E3 ligase specificity by Vpu seems to promote the degradation of host IKBKB, leading to NF-kappa-B down-regulation and subsequent apoptosis. Acts as a viroporin that forms an oligomeric ion channel in membranes. Modulates the host DNA repair mechanisms to promote degradation of nuclear viral cDNA in cells that are already productively infected in order to suppress immune sensing and proviral hyper-integration (superinfection). Manipulates PML-NBs and modulates SUMOylation of host BLM protein thereby enhancing its DNA-end processing activity toward viral unintegrated linear DNA. Also inhibits RAD52-mediated homologous repair of viral cDNA, preventing the generation of dead-end circular forms of single copies of the long terminal repeat and permitting sustained nucleolytic attack. The sequence is that of Protein Vpu from Human immunodeficiency virus type 1 group M subtype B (isolate YU-2) (HIV-1).